The chain runs to 533 residues: Methyl-accepting chemotaxis protein IV (533 aa).

Residues 1 to 6 (MFNRIR) lie on the Cytoplasmic side of the membrane. The chain crosses the membrane as a helical span at residues 7–33 (ISTTLFLILILCGILQIGSNGMSFWAF). Residues 34–188 (RDDLQRLNQV…AQSQRNYQIS (155 aa)) are Periplasmic-facing. Residues 189 to 209 (ALVFISMIIVAAIYISSALWW) form a helical membrane-spanning segment. Topologically, residues 210 to 533 (TRKMIVQPLA…VQLQIAPVVS (324 aa)) are cytoplasmic. In terms of domain architecture, HAMP spans 212 to 264 (KMIVQPLAIIGSHFDSIAAGNLARPIAVYGRNEITAIFASLKTMQQALRGTVS). The Methyl-accepting transducer domain occupies 269–498 (GSQEMHIGIA…EAAVATEQLA (230 aa)). Q293, Q300, and Q307 each carry glutamate methyl ester (Gln). At E489 the chain carries Glutamate methyl ester (Glu).

Belongs to the methyl-accepting chemotaxis (MCP) protein family.

Its subcellular location is the cell inner membrane. Its function is as follows. Mediates taxis toward dipeptides via an interaction with the periplasmic dipeptide-binding protein. In terms of biological role, chemotactic-signal transducers respond to changes in the concentration of attractants and repellents in the environment, transduce a signal from the outside to the inside of the cell, and facilitate sensory adaptation through the variation of the level of methylation. Attractants increase the level of methylation while repellents decrease the level of methylation, the methyl groups are added by the methyltransferase CheR and removed by the methylesterase CheB. This chain is Methyl-accepting chemotaxis protein IV (tap), found in Escherichia coli (strain K12).